The primary structure comprises 270 residues: Complement factor H-related protein 2 (270 aa).

A signal peptide spans M1 to G18. Sushi domains follow at residues F22–L84, R85–S142, E147–D205, and P206–E268. Intrachain disulfides connect C23–C72, C55–C83, C87–C129, C114–C140, C149–C192, C178–C203, C207–C257, and C241–C267. N-linked (GlcNAc...) asparagine glycosylation is present at N126.

As to quaternary structure, head-to-tail homodimer and heterodimer with CFHR1 or CFHR5. N-glycosylated. As to expression, expressed by the liver and secreted in plasma.

It localises to the secreted. Its function is as follows. Involved in complement regulation. The dimerized forms have avidity for tissue-bound complement fragments and efficiently compete with the physiological complement inhibitor CFH. Can associate with lipoproteins and may play a role in lipid metabolism. This Homo sapiens (Human) protein is Complement factor H-related protein 2 (CFHR2).